The sequence spans 410 residues: Argininosuccinate synthase (410 aa).

Residues 11 to 19 (AYSGGLDTS) and alanine 37 contribute to the ATP site. Residues tyrosine 88 and serine 93 each coordinate L-citrulline. Residue 116–124 (SHGCTGKGN) participates in ATP binding. Positions 120, 124, and 125 each coordinate L-aspartate. Asparagine 124 provides a ligand contact to L-citrulline. 5 residues coordinate L-citrulline: arginine 128, serine 181, serine 190, glutamate 269, and tyrosine 281.

The protein belongs to the argininosuccinate synthase family. Type 1 subfamily. In terms of assembly, homotetramer.

It is found in the cytoplasm. The enzyme catalyses L-citrulline + L-aspartate + ATP = 2-(N(omega)-L-arginino)succinate + AMP + diphosphate + H(+). It functions in the pathway amino-acid biosynthesis; L-arginine biosynthesis; L-arginine from L-ornithine and carbamoyl phosphate: step 2/3. This is Argininosuccinate synthase (arg12) from Schizosaccharomyces pombe (strain 972 / ATCC 24843) (Fission yeast).